The primary structure comprises 602 residues: Carbon catabolite repressor protein 4 homolog 1 (602 aa).

The disordered stretch occupies residues Ala113–Gly136. Glu299 is a Mg(2+) binding site.

Belongs to the CCR4/nocturin family. Component of the CCR4-NOT complex, at least composed of CRR4 and CAF1 proteins. The cofactor is Mg(2+).

The protein localises to the nucleus. The protein resides in the cytoplasm. It carries out the reaction Exonucleolytic cleavage of poly(A) to 5'-AMP.. Acts as a catalytic component of the CCR4-NOT core complex, which in the nucleus seems to be a general transcription factor, and in the cytoplasm the major mRNA deadenylase involved in mRNA turnover. The chain is Carbon catabolite repressor protein 4 homolog 1 (CCR4-1) from Arabidopsis thaliana (Mouse-ear cress).